Consider the following 294-residue polypeptide: ATP synthase gamma chain (294 aa).

It belongs to the ATPase gamma chain family. In terms of assembly, F-type ATPases have 2 components, CF(1) - the catalytic core - and CF(0) - the membrane proton channel. CF(1) has five subunits: alpha(3), beta(3), gamma(1), delta(1), epsilon(1). CF(0) has three main subunits: a, b and c.

Its subcellular location is the cell inner membrane. Its function is as follows. Produces ATP from ADP in the presence of a proton gradient across the membrane. The gamma chain is believed to be important in regulating ATPase activity and the flow of protons through the CF(0) complex. The sequence is that of ATP synthase gamma chain from Campylobacter jejuni subsp. jejuni serotype O:6 (strain 81116 / NCTC 11828).